The following is a 248-amino-acid chain: Probable transcriptional regulatory protein ECH_0704 (248 aa).

Residues M1–R21 form a disordered region.

Belongs to the TACO1 family.

Its subcellular location is the cytoplasm. The protein is Probable transcriptional regulatory protein ECH_0704 of Ehrlichia chaffeensis (strain ATCC CRL-10679 / Arkansas).